The following is a 588-amino-acid chain: Autophagy-related protein 22-1 (588 aa).

The helical transmembrane segment at 35–55 (YGWAAEVFTVCAMGSFLPITL) threads the bilayer. The N-linked (GlcNAc...) asparagine glycan is linked to Asn84. The next 3 helical transmembrane spans lie at 109–129 (TASFAMYTFSVSVLIQAILII), 144–164 (LLVSFAAIGSICTMLILAVTP), and 168–188 (LLGGLFAIVANTCLGASFVLL). N-linked (GlcNAc...) asparagine glycosylation is present at Asn255. Helical transmembrane passes span 270–290 (GIGIGYIGAVFLQGICILVIV), 301–321 (LVLFLIGLWWFIFTIPAAFWL), 365–385 (ILLFLASWFLLSDGIATVSGT), 399–419 (AALGMINVITMISGVFGAFSW), 434–454 (IIACIFLFELVPLYGLLGFIP), 471–493 (FPLGVIYGLVMGGLSSYCRSFFG), 507–527 (LYAITDKGSSVFGPAIVGFIT), and 536–556 (AFFFLAILILLPLPLMLLVDA).

This sequence belongs to the ATG22 family.

It is found in the vacuole membrane. Its function is as follows. Vacuolar effluxer which mediate the efflux of amino acids resulting from autophagic degradation. The release of autophagic amino acids allows the maintenance of protein synthesis and viability during nitrogen starvation. The protein is Autophagy-related protein 22-1 (atg22-1) of Emericella nidulans (strain FGSC A4 / ATCC 38163 / CBS 112.46 / NRRL 194 / M139) (Aspergillus nidulans).